Reading from the N-terminus, the 283-residue chain is D-alanine aminotransferase (283 aa).

Position 31 (Tyr31) interacts with substrate. Arg50 provides a ligand contact to pyridoxal 5'-phosphate. Residues Arg98 and His100 each contribute to the substrate site. The active-site Proton acceptor is the Lys144. N6-(pyridoxal phosphate)lysine is present on Lys144. Glu176 lines the pyridoxal 5'-phosphate pocket.

Belongs to the class-IV pyridoxal-phosphate-dependent aminotransferase family. In terms of assembly, homodimer. Pyridoxal 5'-phosphate serves as cofactor.

It catalyses the reaction D-alanine + 2-oxoglutarate = D-glutamate + pyruvate. Acts on the D-isomers of alanine, leucine, aspartate, glutamate, aminobutyrate, norvaline and asparagine. The enzyme transfers an amino group from a substrate D-amino acid to the pyridoxal phosphate cofactor to form pyridoxamine and an alpha-keto acid in the first half-reaction. The second half-reaction is the reverse of the first, transferring the amino group from the pyridoxamine to a second alpha-keto acid to form the product D-amino acid via a ping-pong mechanism. This is an important process in the formation of D-alanine and D-glutamate, which are essential bacterial cell wall components. The polypeptide is D-alanine aminotransferase (dat) (Bacillus licheniformis).